Here is a 221-residue protein sequence, read N- to C-terminus: MSEEWVPKTQLGKLVASGQIKTMGEALRSKLPLKEYEIVDYLLPNLKDEVIDIKRAQRMTDSGRRMTYSITVVVGNGDGYVGLGIGRSKEAAPAIRKALINAKLNIMEIRRGCGSWECGCGRAHTLPFLVQGKSGSVRITLKPAPRGVGLAVGDVARTILSIAGIEDAWGFAAGHTKTTVNYALAVYNALKETSKVRINPGIVLSTPIYSGSVVNVSGHKD.

The S5 DRBM domain occupies Leu46–Ile109.

Belongs to the universal ribosomal protein uS5 family. As to quaternary structure, part of the 30S ribosomal subunit. Contacts protein S4.

Functionally, with S4 and S12 plays an important role in translational accuracy. This Thermoplasma acidophilum (strain ATCC 25905 / DSM 1728 / JCM 9062 / NBRC 15155 / AMRC-C165) protein is Small ribosomal subunit protein uS5.